The sequence spans 302 residues: Putative peptide permease protein BRA0407/BS1330_II0404 (302 aa).

Residues 1 to 22 form a disordered region; the sequence is MRSSIHASRLRKMGQSIPASTG. Transmembrane regions (helical) follow at residues 38-58, 101-121, 147-167, 200-222, 230-250, and 268-288; these read IFGL…PLWL, LLVA…IGAI, IFLL…VVVI, AGLG…VVYA, ILLE…AASW, and WQWL…NFIG. An ABC transmembrane type-1 domain is found at 97–288; it reads GRISLLVAVS…LAVLAINFIG (192 aa).

This sequence belongs to the binding-protein-dependent transport system permease family. The complex is composed of two ATP-binding proteins (BRA0404 and BRA0405), two transmembrane proteins (BRA0407 and BRA0408) and a solute-binding protein (BRA0409).

The protein localises to the cell inner membrane. Probably part of an ABC transporter complex that could be involved in peptide import. Probably responsible for the translocation of the substrate across the membrane. The protein is Putative peptide permease protein BRA0407/BS1330_II0404 of Brucella suis biovar 1 (strain 1330).